Here is a 236-residue protein sequence, read N- to C-terminus: Ribose-5-phosphate isomerase A 2 (236 aa).

Substrate is bound by residues 31 to 34, 86 to 89, and 99 to 102; these read SGTT, DGPD, and KGGG. Glu-108 functions as the Proton acceptor in the catalytic mechanism. Residue Lys-126 coordinates substrate.

It belongs to the ribose 5-phosphate isomerase family. In terms of assembly, homodimer.

It carries out the reaction aldehydo-D-ribose 5-phosphate = D-ribulose 5-phosphate. It functions in the pathway carbohydrate degradation; pentose phosphate pathway; D-ribose 5-phosphate from D-ribulose 5-phosphate (non-oxidative stage): step 1/1. Its function is as follows. Catalyzes the reversible conversion of ribose-5-phosphate to ribulose 5-phosphate. The polypeptide is Ribose-5-phosphate isomerase A 2 (Yersinia pestis).